A 240-amino-acid chain; its full sequence is 2,3,4,5-tetrahydropyridine-2,6-dicarboxylate N-acetyltransferase (240 aa).

Belongs to the transferase hexapeptide repeat family. DapH subfamily.

It catalyses the reaction (S)-2,3,4,5-tetrahydrodipicolinate + acetyl-CoA + H2O = L-2-acetamido-6-oxoheptanedioate + CoA. It functions in the pathway amino-acid biosynthesis; L-lysine biosynthesis via DAP pathway; LL-2,6-diaminopimelate from (S)-tetrahydrodipicolinate (acetylase route): step 1/3. Functionally, catalyzes the transfer of an acetyl group from acetyl-CoA to tetrahydrodipicolinate. The protein is 2,3,4,5-tetrahydropyridine-2,6-dicarboxylate N-acetyltransferase of Staphylococcus epidermidis (strain ATCC 12228 / FDA PCI 1200).